The sequence spans 164 residues: Large ribosomal subunit protein bL17 (164 aa).

Residues 127 to 164 (RARTDSVPARKGAGKKDASRVSGTVPDGQSQKIGKKKE) form a disordered region.

The protein belongs to the bacterial ribosomal protein bL17 family. As to quaternary structure, part of the 50S ribosomal subunit. Contacts protein L32.

This Treponema pallidum (strain Nichols) protein is Large ribosomal subunit protein bL17.